Reading from the N-terminus, the 109-residue chain is Biphenyl dioxygenase system ferredoxin subunit (109 aa).

A Rieske domain is found at 4–100; sequence TRVCDRRDVP…IRIEDNDVLV (97 aa). Residues cysteine 43, histidine 45, cysteine 63, and histidine 66 each contribute to the [2Fe-2S] cluster site.

The protein belongs to the bacterial ring-hydroxylating dioxygenase ferredoxin component family. In terms of assembly, this dioxygenase system consists of four proteins: the two subunits of the hydroxylase component (BphA and BphE), a ferredoxin (BphF) and a ferredoxin reductase (BphG).

Functionally, this protein seems to be a 2Fe-2S ferredoxin. The chain is Biphenyl dioxygenase system ferredoxin subunit (bphF) from Paraburkholderia xenovorans (strain LB400).